The chain runs to 283 residues: Peroxisome biogenesis protein 22 (283 aa).

Alanine 2 bears the N-acetylalanine mark. The helical transmembrane segment at 45 to 62 (IGAIAGLAIAVIFTWRAI) threads the bilayer. A disordered region spans residues 66–107 (GEQRQRRQPKRRIHNAETSSAAAAASQSNLASSVAPEVSSPR). Low complexity predominate over residues 81 to 100 (AETSSAAAAASQSNLASSVA).

The protein belongs to the peroxin-22 family. In terms of assembly, interacts with PEX4.

It is found in the peroxisome membrane. In terms of biological role, may be tethered PEX4 to the peroxisome membrane and may be involved in a late step of the matrix protein import. Does not play a role in the biogenesis of the peroxisomal membrane. This Arabidopsis thaliana (Mouse-ear cress) protein is Peroxisome biogenesis protein 22 (PEX22).